A 100-amino-acid chain; its full sequence is Aspartyl/glutamyl-tRNA(Asn/Gln) amidotransferase subunit C (100 aa).

Belongs to the GatC family. Heterotrimer of A, B and C subunits.

It catalyses the reaction L-glutamyl-tRNA(Gln) + L-glutamine + ATP + H2O = L-glutaminyl-tRNA(Gln) + L-glutamate + ADP + phosphate + H(+). It carries out the reaction L-aspartyl-tRNA(Asn) + L-glutamine + ATP + H2O = L-asparaginyl-tRNA(Asn) + L-glutamate + ADP + phosphate + 2 H(+). Its function is as follows. Allows the formation of correctly charged Asn-tRNA(Asn) or Gln-tRNA(Gln) through the transamidation of misacylated Asp-tRNA(Asn) or Glu-tRNA(Gln) in organisms which lack either or both of asparaginyl-tRNA or glutaminyl-tRNA synthetases. The reaction takes place in the presence of glutamine and ATP through an activated phospho-Asp-tRNA(Asn) or phospho-Glu-tRNA(Gln). The sequence is that of Aspartyl/glutamyl-tRNA(Asn/Gln) amidotransferase subunit C from Staphylococcus saprophyticus subsp. saprophyticus (strain ATCC 15305 / DSM 20229 / NCIMB 8711 / NCTC 7292 / S-41).